The sequence spans 513 residues: Leucine-rich repeat-containing protein 24 (513 aa).

Residues 1–20 form the signal peptide; the sequence is MALRAPALLPLLLLLLPLRA. In terms of domain architecture, LRRNT spans 21-50; the sequence is AGCPAACRCYSATVECGALRLRVVPLGIPP. 6 LRR repeats span residues 51–72, 75–96, 99–120, 123–144, 147–168, and 171–192; these read GTQTLFLQDNNIARLEPGALAP, ALRRLYLHNNSLRALEAGAFRA, RLLELALTSNRLRGLRSGAFVG, QLRVLYLAGNQLARLLDFTFLH, RLQELHLQENSIELLEDQALAG, and SLALLDLSRNQLGTISREALQP. In terms of domain architecture, LRRCT spans 204 to 259; that stretch reads NPWRCDCALHWLGAWIKEGGQRLLTSRDRKIMCAEPPRLALQSLLDVSHSSLICIP. The region spanning 260-361 is the Ig-like C2-type domain; sequence PSVHVQPLEL…GAARVPFRLL (102 aa). The cysteines at positions 281 and 345 are disulfide-linked. N-linked (GlcNAc...) asparagine glycosylation is found at asparagine 334 and asparagine 363. Positions 365-391 are disordered; the sequence is SRQQPQQPAQPPPPAARPAGSEPRPEA. Residues 406–426 traverse the membrane as a helical segment; the sequence is AIAAAIALLALTALLLVAMIC.

Its subcellular location is the membrane. The protein is Leucine-rich repeat-containing protein 24 (LRRC24) of Homo sapiens (Human).